The following is a 548-amino-acid chain: Glucose-6-phosphate isomerase 1 (548 aa).

E353 (proton donor) is an active-site residue. Residues H384 and K495 contribute to the active site.

This sequence belongs to the GPI family.

Its subcellular location is the cytoplasm. It catalyses the reaction alpha-D-glucose 6-phosphate = beta-D-fructose 6-phosphate. Its pathway is carbohydrate biosynthesis; gluconeogenesis. The protein operates within carbohydrate degradation; glycolysis; D-glyceraldehyde 3-phosphate and glycerone phosphate from D-glucose: step 2/4. Catalyzes the reversible isomerization of glucose-6-phosphate to fructose-6-phosphate. The polypeptide is Glucose-6-phosphate isomerase 1 (Chromohalobacter salexigens (strain ATCC BAA-138 / DSM 3043 / CIP 106854 / NCIMB 13768 / 1H11)).